A 608-amino-acid polypeptide reads, in one-letter code: Microtubule-associated protein 70-3 (608 aa).

The disordered stretch occupies residues 1–23; the sequence is MADGVEEGNAVAPRGPARRRGTV. Residues 40–346 are a coiled coil; it reads DPVRVELTRL…ARSEAQLKEK (307 aa). A required for targeting to microtubules region spans residues 224-458; sequence ILDKLQRQKV…HLLNRSTDAV (235 aa). 2 disordered regions span residues 354–493 and 570–608; these read LEDG…TANN and DKEQEVKARRLGSSKGTGSSQVLSGSRSSSRSGLTRNYQ. Positions 363–379 are enriched in polar residues; the sequence is SGSSRLPTEGKSFSNGP. Positions 402–421 are enriched in low complexity; that stretch reads RRSPSFHSRSSLSSSSSLVL. Positions 476–493 are enriched in polar residues; that stretch reads IENTNSNTDESNKETANN. Positions 542-576 form a coiled coil; sequence LTKAMEVEAKKMRREVAAMEKEVAAMRVDKEQEVK. The span at 586-608 shows a compositional bias: low complexity; it reads TGSSQVLSGSRSSSRSGLTRNYQ.

It belongs to the MAP70 family.

The protein localises to the cytoplasm. It localises to the cytoskeleton. In terms of biological role, plant-specific protein that interact with microtubules. This Oryza sativa subsp. japonica (Rice) protein is Microtubule-associated protein 70-3 (MAP70.3).